Here is an 88-residue protein sequence, read N- to C-terminus: Cytochrome c oxidase subunit 6B2 (88 aa).

A disordered region spans residues 1–22 (MLDVEAQEPPKGKWSTPPFDPR). In terms of domain architecture, CHCH spans 29-75 (IRNCYQNFLDYHRCLKTRTRRGKSTQPCEYYFRVYHSLCPISWVESW). The short motif at 32–42 (CYQNFLDYHRC) is the Cx9C motif element. 2 cysteine pairs are disulfide-bonded: Cys-32/Cys-67 and Cys-42/Cys-56. Residues 56–67 (CEYYFRVYHSLC) carry the Cx10C motif motif.

The protein belongs to the cytochrome c oxidase subunit 6B family. As to quaternary structure, component of the cytochrome c oxidase (complex IV, CIV), a multisubunit enzyme composed of 14 subunits. The complex is composed of a catalytic core of 3 subunits MT-CO1, MT-CO2 and MT-CO3, encoded in the mitochondrial DNA, and 11 supernumerary subunits COX4I1 (or COX4I2), COX5A, COX5B, COX6A1 (or COX6A2), COX6B1 (or COX6B2), COX6C, COX7A2 (or COX7A1), COX7B, COX7C, COX8A and NDUFA4, which are encoded in the nuclear genome. The complex exists as a monomer or a dimer and forms supercomplexes (SCs) in the inner mitochondrial membrane with NADH-ubiquinone oxidoreductase (complex I, CI) and ubiquinol-cytochrome c oxidoreductase (cytochrome b-c1 complex, complex III, CIII), resulting in different assemblies (supercomplex SCI(1)III(2)IV(1) and megacomplex MCI(2)III(2)IV(2)). As to expression, testis specific. Weak expression in thymus and heart. Expressed in cancer cell lines.

The protein resides in the mitochondrion inner membrane. The protein operates within energy metabolism; oxidative phosphorylation. Functionally, component of the cytochrome c oxidase, the last enzyme in the mitochondrial electron transport chain which drives oxidative phosphorylation. The respiratory chain contains 3 multisubunit complexes succinate dehydrogenase (complex II, CII), ubiquinol-cytochrome c oxidoreductase (cytochrome b-c1 complex, complex III, CIII) and cytochrome c oxidase (complex IV, CIV), that cooperate to transfer electrons derived from NADH and succinate to molecular oxygen, creating an electrochemical gradient over the inner membrane that drives transmembrane transport and the ATP synthase. Cytochrome c oxidase is the component of the respiratory chain that catalyzes the reduction of oxygen to water. Electrons originating from reduced cytochrome c in the intermembrane space (IMS) are transferred via the dinuclear copper A center (CU(A)) of subunit 2 and heme A of subunit 1 to the active site in subunit 1, a binuclear center (BNC) formed by heme A3 and copper B (CU(B)). The BNC reduces molecular oxygen to 2 water molecules using 4 electrons from cytochrome c in the IMS and 4 protons from the mitochondrial matrix. The protein is Cytochrome c oxidase subunit 6B2 (COX6B2) of Homo sapiens (Human).